Consider the following 59-residue polypeptide: Large ribosomal subunit protein uL30 (59 aa).

It belongs to the universal ribosomal protein uL30 family. Part of the 50S ribosomal subunit.

This chain is Large ribosomal subunit protein uL30, found in Hydrogenobaculum sp. (strain Y04AAS1).